The primary structure comprises 192 residues: NF-kappa-B inhibitor-interacting Ras-like protein 1 (192 aa).

Residues 1 to 192 (MGKGCKVVVC…KSKGTPSNDI (192 aa)) are small GTPase-like. 11 to 18 (GMASVGKT) serves as a coordination point for GTP. The Effector region motif lies at 35-43 (TSDTQEDIY). Residues 61–65 (DTRGL) and 120–123 (NKCE) each bind GTP. Positions 169–192 (TQPQSKSAFPLPGRKSKGTPSNDI) are disordered.

It belongs to the small GTPase superfamily. Ras family. KappaB-Ras subfamily.

It is found in the cytoplasm. Its function is as follows. Atypical Ras-like protein that acts as a potent regulator of NF-kappa-B activity by preventing the degradation of NF-kappa-B inhibitor beta (NFKBIB) by most signals, explaining why NFKBIB is more resistant to degradation. This chain is NF-kappa-B inhibitor-interacting Ras-like protein 1 (nkiras1), found in Danio rerio (Zebrafish).